The following is a 1008-amino-acid chain: MASSPLPGPNDILLASPSSAFQPDALSQPRPGHANLKPNQVGQVILYGIPIVSLVIDGQERLCLAQISNTLLKNFSYNEIHNRRVALGITCVQCTPVQLEILRRAGAMPISSRRCGMITKREAERLCKSFLGENRPPKLPDNFAFDVSHECAWGCRGSFIPARYNSSRAKCIKCSYCNMYFSPNKFIFHSHRTPDAKYTQPDAANFNSWRRHLKLTDKSPQDELVFAWEDVKAMFNGGSRKRALPQPSAHPACHPLSSVKAAAVAAAAAVAGGGGLLGPHLLGAPPPPPPPPPLAELAGAPHAHHKRPRFDDDDDSLQEAAVVAAASLSAAAASLSVAAATGGAGPGAGGPGGGCVAGVGVGASAGAGAAAGTKGPRSYPVIPVPSKGSFGGVLQKFPGCGGLFPHPYTFPAAAAAFGLCHKKEDAGTAAEALGGAGAGSAGAAPKAGLSGLFWPAGRKDAFYPPFCMFWPPRTPGGLPVPTYLQPPPQPPSALGCALGDSPALLRQAFLDLAEPGGAGGSAEAAPPPGQPPPVVANGPGSGPPATGGTGARDTLFESPPGGSGGDCSAGSTPPAEQGVTSGTGSASSGAGSVGTRVPAPHHPHLLEGRKAGGGSYHHSSAFRPVGGKDDAESLAKLHGASAGTPHSAPAHHHHHHHHPHHHHHHPPQPPSPLLLLQPQPDEPGSERHHPAPPPPPPPPPLAPQPHHRGLLSPEGTSCSYPSEDSSEDEEDEEEEQEVDVEGHKPLEGEEEEDGRDPEDEEEEDEETRVLLGDSLVGGGRFLQGRGLSEKGSGRDRTTPAVGAFPLALNSSRLLQEDGKLGDSGGSDLPAPPPPPLAPQKASSSGGSRPGSPVHHPSLEEEPSYKDNQKPKENNQVIISTKDDNFSDKNKGHGFFITDSDSSGDFWRERSGEHTQETNSPHSLKKDVENMGKEELQKVLFEQIDLRRRLEQEFQVLKGNTSFPVFNNFQDQMKRELAYREEMVQQLQIIPYAASLIRKEKLGAHLSKS.

2 disordered regions span residues H280–D315 and E514–V927. Composition is skewed to pro residues over residues A284–L294 and A525–V534. 2 stretches are compositionally biased toward low complexity: residues V535–P544 and G578–T595. The span at G626 to A635 shows a compositional bias: basic and acidic residues. The span at P649 to P666 shows a compositional bias: basic residues. Residues A691–P703 show a composition bias toward pro residues. Acidic residues-rich tracts occupy residues D724–D739 and G748–E766. The segment covering L787–T797 has biased composition (basic and acidic residues). Low complexity predominate over residues S842–H855. Basic and acidic residues-rich tracts occupy residues P856 to E872, T880 to K890, and F905 to Q915.

It belongs to the SKI family. In terms of assembly, interacts with SMAD2 and SMAD3. Expression is restricted to adult and embryonic central nervous system. Expressed at high levels in the developing cerebellum, ventral metencephalon and myelencephalon at 12.5 dpc (at protein level). In the adult cerebellum, expressed specifically in Purkinje cells.

The protein resides in the nucleus. The protein localises to the cytoplasm. Acts as a TGF-beta antagonist in the nervous system. Exhibits transcriptional repressor activity. This is SKI family transcriptional corepressor 2 from Mus musculus (Mouse).